Reading from the N-terminus, the 214-residue chain is Ras-related protein Rab2BV (214 aa).

19-26 (GDSGVGKS) provides a ligand contact to GTP. The Effector region signature appears at 41-49 (SKSTIGVEF). GTP is bound by residues 67–71 (DTAGQ) and 125–128 (NKSD). Residues cysteine 211 and cysteine 212 are each lipidated (S-geranylgeranyl cysteine).

It belongs to the small GTPase superfamily. Rab family.

Its subcellular location is the cell membrane. This Beta vulgaris (Sugar beet) protein is Ras-related protein Rab2BV (RAB2BV).